The chain runs to 164 residues: Ubiquitin-fold modifier-conjugating enzyme 1 (164 aa).

The active-site Glycyl thioester intermediate is the C116.

The protein belongs to the ubiquitin-conjugating enzyme family. UFC1 subfamily.

E2-like enzyme which forms an intermediate with UFM1 via a thioester linkage. The chain is Ubiquitin-fold modifier-conjugating enzyme 1 from Drosophila willistoni (Fruit fly).